We begin with the raw amino-acid sequence, 232 residues long: Alpha N-terminal protein methyltransferase 1 (232 aa).

Residues Gly-71, Arg-76, 123–124, and Gln-139 contribute to the S-adenosyl-L-methionine site; that span reads MQ.

Belongs to the methyltransferase superfamily. NTM1 family.

The protein localises to the cytoplasm. The enzyme catalyses N-terminal L-alanyl-L-prolyl-L-lysyl-[protein] + 3 S-adenosyl-L-methionine = N-terminal N,N,N-trimethyl-L-alanyl-L-prolyl-L-lysyl-[protein] + 3 S-adenosyl-L-homocysteine + 3 H(+). It carries out the reaction N-terminal L-seryl-L-prolyl-L-lysyl-[protein] + 3 S-adenosyl-L-methionine = N-terminal N,N,N-trimethyl-L-seryl-L-prolyl-L-lysyl-[protein] + 3 S-adenosyl-L-homocysteine + 3 H(+). It catalyses the reaction N-terminal L-prolyl-L-prolyl-L-lysyl-[protein] + 2 S-adenosyl-L-methionine = N-terminal N,N-dimethyl-L-prolyl-L-prolyl-L-lysyl-[protein] + 2 S-adenosyl-L-homocysteine + 2 H(+). Its function is as follows. Alpha-N-methyltransferase that methylates the N-terminus of target proteins containing the N-terminal motif [Ala/Pro/Ser]-Pro-Lys when the initiator Met is cleaved. Specifically catalyzes mono-, di- or tri-methylation of exposed alpha-amino group of Ala or Ser residue in the [Ala/Ser]-Pro-Lys motif and mono- or di-methylation of Pro in the Pro-Pro-Lys motif. Responsible for the N-terminal methylation of the ribosomal proteins RPL12A, RPL12B, RPS25A and RPS25B. This chain is Alpha N-terminal protein methyltransferase 1 (TAE1), found in Saccharomyces cerevisiae (strain ATCC 204508 / S288c) (Baker's yeast).